The primary structure comprises 731 residues: MFVAAMTESDQNIINLLFSGHYADPFAVLGMHDTASGLEVRALLPDAIDVWVVDAHSGRKVANLQCRDPRGFFASAIPRRKKPFSYRLAVTWPQDTQVIDDPYRFGTLLQELDIWLLAEGRHLRPFETLGAHPSTLDGVVGTCFAVWAPNAQRVSVVGDFNFWDGRRHPMRRRRENGVWELFVPGVGPGQLYKFEIIDCYGNVLVKSDPYAFESQMRPDTASVVSRLPPALPVDEARQHANELQSPISIYEVHLGSWRRHTHNNFWLSYRELADQLVPYVKEMGFTHVELMPVHKHPFDGSWGYQPLGLYAPTRRFGSPDDFRYLVSAFHEAGINVLLDWVSGHFPADSYGLARFDGPALYEYADPKEGYHQDWNTLIYNFDRHEVRNYLAGNALYWTERFGVDGLRVDAVASMIYRDYSRRDGEWVPNYFGGKENLEAIGFLRYTNQMLGQHHAGAVTIAEESTDYAGVTLPPEHGGLGFHYKWNMGWMHDSLAYMQLDPVHRKYHHDLLTFGMLYAYSENFVLPLSHDEVVHGKRSLLDRMPGDVWQKFANLRAYYGFMWAYPGKKLLFMGGEFAQGREWNHDTSLDWHLLDEPEGWHAGVQQLVRDLNHCYRQHPPLYQCDYLHQGFEWVVVDDRENSVFAFIRRDADGNEMLIISNFTPVPRDSYRVGINQPGAWREVLNTDSWHYHGGNLGNQGLVYSETVGSHSRPQSLVLALPPLATLYLVKEA.

Catalysis depends on Asp-409, which acts as the Nucleophile. Glu-462 acts as the Proton donor in catalysis.

Belongs to the glycosyl hydrolase 13 family. GlgB subfamily. In terms of assembly, monomer.

The enzyme catalyses Transfers a segment of a (1-&gt;4)-alpha-D-glucan chain to a primary hydroxy group in a similar glucan chain.. It participates in glycan biosynthesis; glycogen biosynthesis. Functionally, catalyzes the formation of the alpha-1,6-glucosidic linkages in glycogen by scission of a 1,4-alpha-linked oligosaccharide from growing alpha-1,4-glucan chains and the subsequent attachment of the oligosaccharide to the alpha-1,6 position. This chain is 1,4-alpha-glucan branching enzyme GlgB (glgB), found in Dickeya chrysanthemi (Pectobacterium chrysanthemi).